Reading from the N-terminus, the 382-residue chain is Sphingosine 1-phosphate receptor 1 (382 aa).

V2 bears the N-acetylvaline mark. Residues 2-46 (VSTSIPEVKALRSSVSDYGNYDIIVRHYNYTGKLNIGAEKDHGIK) are Extracellular-facing. K10 is modified (N6-acetyllysine). N-linked (GlcNAc...) asparagine glycosylation is present at N30. The chain crosses the membrane as a helical span at residues 47–68 (LTSVVFILICCFIILENIFVLL). The Cytoplasmic segment spans residues 69 to 82 (TIWKTKKFHRPMYY). The chain crosses the membrane as a helical span at residues 83-104 (FIGNLALSDLLAGVAYTANLLL). The Extracellular segment spans residues 105 to 116 (SGATTYKLTPAQ). A helical transmembrane segment spans residues 117 to 138 (WFLREGSMFVALSASVFSLLAI). 120-121 (RE) lines the sphing-4-enine 1-phosphate pocket. Residues 139–160 (AIERYITMLKMKLHNGSNSSRS) are Cytoplasmic-facing. The helical transmembrane segment at 161–182 (FLLISACWVISLILGGLPIMGW) threads the bilayer. The Extracellular segment spans residues 183–196 (NCISSLSSCSTVLP). A disulfide bridge links C184 with C191. Residues 197-224 (LYHKHYILFCTTVFTLLLLSIVILYCRI) form a helical membrane-spanning segment. Over 225 to 257 (YSLVRTRSRRLTFRKNISKASRSSEKSLALLKT) the chain is Cytoplasmic. T236 bears the Phosphothreonine mark. Residues 258–278 (VIIVLSVFIACWAPLFILLLL) traverse the membrane as a helical segment. Residue 265 to 269 (FIACW) participates in sphing-4-enine 1-phosphate binding. Residues 279 to 289 (DVGCKAKTCDI) are Extracellular-facing. Cysteines 282 and 287 form a disulfide. Residues 290–310 (LYKAEYFLVLAVLNSGTNPII) traverse the membrane as a helical segment. The Cytoplasmic portion of the chain corresponds to 311 to 382 (YTLTNKEMRR…MSSGNVNSSS (72 aa)). A lipid anchor (S-palmitoyl cysteine) is attached at C328. Residues 348-382 (MEFSRSKSDNSSHPQKDDGDNPETIMSSGNVNSSS) form a disordered region. Phosphoserine is present on residues S351 and S353. Over residues 351-366 (SRSKSDNSSHPQKDDG) the composition is skewed to basic and acidic residues. The segment covering 371–382 (TIMSSGNVNSSS) has biased composition (polar residues).

The protein belongs to the G-protein coupled receptor 1 family. Interacts with GNAI1 and GNAI3. Interacts with CD69; this interaction promotes S1PR1 degradation. Post-translationally, palmitoylated by ZDHHC5. Palmitoylation is required for targeting to plasma membrane, enabling G(i) coupling. As to expression, expressed in a wide variety of tissues with highest levels in brain, heart and spleen. Lower levels found in kidney, liver, lung, muscle, placenta, thymus, and uterus. Very low levels in intestine, stomach and testis. According to PubMed:9931453, expressed modestly in apparent endothelial cells surrounding some blood vessels (e.g. aortic trunk).

Its subcellular location is the cell membrane. The protein resides in the endosome. The protein localises to the membrane raft. Functionally, G-protein coupled receptor for the bioactive lysosphingolipid sphingosine 1-phosphate (S1P) that seems to be coupled to the G(i) subclass of heteromeric G proteins. Signaling leads to the activation of RAC1, SRC, PTK2/FAK1 and MAP kinases. Plays an important role in cell migration, probably via its role in the reorganization of the actin cytoskeleton and the formation of lamellipodia in response to stimuli that increase the activity of the sphingosine kinase SPHK1. Required for normal chemotaxis toward sphingosine 1-phosphate. Required for normal embryonic heart development and normal cardiac morphogenesis. Plays an important role in the regulation of sprouting angiogenesis and vascular maturation. Inhibits sprouting angiogenesis to prevent excessive sprouting during blood vessel development. Required for normal egress of mature T-cells from the thymus into the blood stream and into peripheral lymphoid organs. Plays a role in the migration of osteoclast precursor cells, the regulation of bone mineralization and bone homeostasis. Plays a role in responses to oxidized 1-palmitoyl-2-arachidonoyl-sn-glycero-3-phosphocholine by pulmonary endothelial cells and in the protection against ventilator-induced lung injury. The protein is Sphingosine 1-phosphate receptor 1 of Mus musculus (Mouse).